The chain runs to 465 residues: Purple acid phosphatase 2 (465 aa).

The first 32 residues, 1–32 (MGASRTGCYLLAVVLAAVMNAAIAGITSSFIR), serve as a signal peptide directing secretion. N-linked (GlcNAc...) asparagine glycans are attached at residues asparagine 110 and asparagine 138. Residue aspartate 164 coordinates Fe cation. An N-linked (GlcNAc...) asparagine glycan is attached at asparagine 172. Positions 193 and 196 each coordinate Fe cation. Residue aspartate 193 coordinates Mn(2+). Asparagine 230 lines the Mn(2+) pocket. Position 230 (asparagine 230) interacts with substrate. Residue asparagine 303 is glycosylated (N-linked (GlcNAc...) asparagine). Histidine 315 provides a ligand contact to Mn(2+). Histidine 325 serves as the catalytic Proton donor. Histidine 352 lines the Mn(2+) pocket. 352 to 354 (HVH) is a substrate binding site. Histidine 354 serves as a coordination point for Fe cation. N-linked (GlcNAc...) asparagine glycans are attached at residues asparagine 400 and asparagine 425.

It belongs to the metallophosphoesterase superfamily. Purple acid phosphatase family. In terms of assembly, homodimer; disulfide-linked. Fe cation serves as cofactor. Mn(2+) is required as a cofactor. It depends on Zn(2+) as a cofactor. The cofactor is Cu(2+). Requires Mg(2+) as cofactor.

It is found in the secreted. It carries out the reaction a phosphate monoester + H2O = an alcohol + phosphate. This chain is Purple acid phosphatase 2 (PAP2), found in Ipomoea batatas (Sweet potato).